The chain runs to 3169 residues: FRAS1-related extracellular matrix protein 2 (3169 aa).

The segment at 1 to 24 (MHSAGTPGLSSRRTGNSTSFQPGP) is disordered. The N-terminal stretch at 1-46 (MHSAGTPGLSSRRTGNSTSFQPGPPPPPRLLLLLLLLLSLVSRVPA) is a signal peptide. Residues 8 to 21 (GLSSRRTGNSTSFQ) are compositionally biased toward polar residues. Residues 47-3113 (QPAAFGRALL…SPSSAVSLVT (3067 aa)) lie on the Extracellular side of the membrane. 12 CSPG repeats span residues 319 to 413 (KPSF…LELE), 438 to 537 (APVV…LRMV), 560 to 675 (PPVL…FRVQ), 700 to 807 (PPEL…FQVE), 828 to 919 (QPPE…LEVS), 945 to 1037 (HPTG…LSLS), 1066 to 1168 (APEI…FRCS), 1189 to 1282 (EQPE…IKLT), 1303 to 1399 (TPRM…FDVT), 1420 to 1512 (VFPD…FQVT), 1532 to 1621 (KKPV…FTVT), and 1655 to 1752 (VPQI…FAVE). N-linked (GlcNAc...) asparagine glycosylation is present at Asn-358. 2 N-linked (GlcNAc...) asparagine glycosylation sites follow: Asn-1244 and Asn-1369. Residues Asn-1584 and Asn-1741 are each glycosylated (N-linked (GlcNAc...) asparagine). Calx-beta domains follow at residues 1759–1858 (LTYQ…VVLS), 1871–1982 (ATVE…VLLS), 1997–2103 (QVTI…LVLR), 2118–2220 (VSIN…LVLG), and 2238–2342 (TLIR…VHLK). The disordered stretch occupies residues 3036 to 3057 (SLVSQGKPQSTTKSRKKREIRS). A compositionally biased stretch (polar residues) spans 3037–3047 (LVSQGKPQSTT). Residues 3114–3134 (VVGGTTVGLLTICLTVIAVLM) form a helical membrane-spanning segment. Over 3135 to 3169 (CRGKESFRGKDAPKGSSSSEPMVPPQSHHNDSSEV) the chain is Cytoplasmic. Residues 3141-3169 (FRGKDAPKGSSSSEPMVPPQSHHNDSSEV) form a disordered region.

This sequence belongs to the FRAS1 family. In terms of assembly, interacts with FREM1.

Its subcellular location is the cell membrane. Its function is as follows. Extracellular matrix protein required for maintenance of the integrity of the skin epithelium and for maintenance of renal epithelia. Required for epidermal adhesion. Involved in the development of eyelids and the anterior segment of the eyeballs. The polypeptide is FRAS1-related extracellular matrix protein 2 (FREM2) (Homo sapiens (Human)).